Here is a 92-residue protein sequence, read N- to C-terminus: Co-chaperonin GroES (92 aa).

This sequence belongs to the GroES chaperonin family. In terms of assembly, heptamer of 7 subunits arranged in a ring. Interacts with the chaperonin GroEL.

Its subcellular location is the cytoplasm. Functionally, together with the chaperonin GroEL, plays an essential role in assisting protein folding. The GroEL-GroES system forms a nano-cage that allows encapsulation of the non-native substrate proteins and provides a physical environment optimized to promote and accelerate protein folding. GroES binds to the apical surface of the GroEL ring, thereby capping the opening of the GroEL channel. The sequence is that of Co-chaperonin GroES from Thermotoga neapolitana.